The following is a 163-amino-acid chain: Globin CTT-V (163 aa).

A signal peptide spans 1–16; sequence MKFFAVLTLCIIGAIA. A Globin domain is found at 18 to 163; sequence PLTSDEANLV…YTVAFEVIPA (146 aa). 2 residues coordinate heme b: His-76 and His-111.

This sequence belongs to the globin family.

The chain is Globin CTT-V (CTT-V) from Chironomus thummi piger (Midge).